The primary structure comprises 51 residues: Large ribosomal subunit protein eL39 (51 aa).

The protein belongs to the eukaryotic ribosomal protein eL39 family.

The chain is Large ribosomal subunit protein eL39 from Hyperthermus butylicus (strain DSM 5456 / JCM 9403 / PLM1-5).